A 122-amino-acid chain; its full sequence is Ribosome-binding factor A (122 aa).

This sequence belongs to the RbfA family. As to quaternary structure, monomer. Binds 30S ribosomal subunits, but not 50S ribosomal subunits or 70S ribosomes.

The protein resides in the cytoplasm. Its function is as follows. One of several proteins that assist in the late maturation steps of the functional core of the 30S ribosomal subunit. Associates with free 30S ribosomal subunits (but not with 30S subunits that are part of 70S ribosomes or polysomes). Required for efficient processing of 16S rRNA. May interact with the 5'-terminal helix region of 16S rRNA. The polypeptide is Ribosome-binding factor A (Cupriavidus pinatubonensis (strain JMP 134 / LMG 1197) (Cupriavidus necator (strain JMP 134))).